The following is a 347-amino-acid chain: MRALGAVVTLLLWGQLFAAELGNDAMDFEDDSCPKPPEIANGYVEHLVRYRCRQFYRLRTEGDGVYTLNDEKQWVNTAAGEKLPECEAVCGKPKHPVVQVQRIIGGSMDAKGSFPWQAKMISRHGLTTGATLISDQWLLTTAKNLFLNHSETASAKDIAPTLTLYVGKNQLVEIEKVVLHPNHSVVDIGLIKLKQRVLVTERVMPICLPSKDYVAPGRVGYLSGWGRNVNFRFTERFKYVMLPVADQDKCVVHYENSTVPEKKNFTSPVGVQPILNEHTFCVGLSRYQEDTCYGDAGSAFAIHDMEEDTWXAAGILSFDKSCAVAEYGVYVRATDLKDWVQETMAKK.

The first 18 residues, 1-18, serve as a signal peptide directing secretion; the sequence is MRALGAVVTLLLWGQLFA. One can recognise a Sushi domain in the interval 31–88; it reads DSCPKPPEIANGYVEHLVRYRCRQFYRLRTEGDGVYTLNDEKQWVNTAAGEKLPECEA. Disulfide bonds link cysteine 52–cysteine 86, cysteine 90–cysteine 207, cysteine 250–cysteine 281, and cysteine 292–cysteine 322. One can recognise a Peptidase S1 domain in the interval 103–345; sequence IIGGSMDAKG…LKDWVQETMA (243 aa). N-linked (GlcNAc...) asparagine glycans are attached at residues asparagine 148, asparagine 182, asparagine 256, and asparagine 264. The interaction with CD163 stretch occupies residues 259–264; the sequence is VPEKKN.

The protein belongs to the peptidase S1 family. As to quaternary structure, tetramer of two alpha and two beta chains; disulfide-linked. The hemoglobin/haptoglobin complex is composed of a haptoglobin dimer bound to two hemoglobin alpha-beta dimers. Interacts with CD163. Interacts with ERGIC3. In terms of tissue distribution, expressed by the liver and secreted in plasma.

It localises to the secreted. As a result of hemolysis, hemoglobin is found to accumulate in the kidney and is secreted in the urine. Haptoglobin captures, and combines with free plasma hemoglobin to allow hepatic recycling of heme iron and to prevent kidney damage. Haptoglobin also acts as an antioxidant, has antibacterial activity and plays a role in modulating many aspects of the acute phase response. Hemoglobin/haptoglobin complexes are rapidly cleared by the macrophage CD163 scavenger receptor expressed on the surface of liver Kupfer cells through an endocytic lysosomal degradation pathway. This chain is Haptoglobin (Hp), found in Mus saxicola (Brown spiny mouse).